We begin with the raw amino-acid sequence, 257 residues long: Imidazole glycerol phosphate synthase subunit HisF (257 aa).

Active-site residues include Asp11 and Asp130.

This sequence belongs to the HisA/HisF family. In terms of assembly, heterodimer of HisH and HisF.

The protein resides in the cytoplasm. The catalysed reaction is 5-[(5-phospho-1-deoxy-D-ribulos-1-ylimino)methylamino]-1-(5-phospho-beta-D-ribosyl)imidazole-4-carboxamide + L-glutamine = D-erythro-1-(imidazol-4-yl)glycerol 3-phosphate + 5-amino-1-(5-phospho-beta-D-ribosyl)imidazole-4-carboxamide + L-glutamate + H(+). It participates in amino-acid biosynthesis; L-histidine biosynthesis; L-histidine from 5-phospho-alpha-D-ribose 1-diphosphate: step 5/9. IGPS catalyzes the conversion of PRFAR and glutamine to IGP, AICAR and glutamate. The HisF subunit catalyzes the cyclization activity that produces IGP and AICAR from PRFAR using the ammonia provided by the HisH subunit. In Prochlorococcus marinus (strain MIT 9515), this protein is Imidazole glycerol phosphate synthase subunit HisF.